A 348-amino-acid polypeptide reads, in one-letter code: GTPase Obg (348 aa).

An Obg domain is found at 1 to 159 (MKFLDQAKIY…KTIILRLKLI (159 aa)). The region spanning 160 to 327 (ADAGLVGLPN…VLRLAADEIW (168 aa)) is the OBG-type G domain. Residues 166-173 (GLPNAGKS), 191-195 (FTTLT), 212-215 (DIPG), 279-282 (NKMD), and 308-310 (SGV) each bind GTP. Positions 173 and 193 each coordinate Mg(2+).

It belongs to the TRAFAC class OBG-HflX-like GTPase superfamily. OBG GTPase family. In terms of assembly, monomer. Mg(2+) serves as cofactor.

The protein resides in the cytoplasm. Its function is as follows. An essential GTPase which binds GTP, GDP and possibly (p)ppGpp with moderate affinity, with high nucleotide exchange rates and a fairly low GTP hydrolysis rate. Plays a role in control of the cell cycle, stress response, ribosome biogenesis and in those bacteria that undergo differentiation, in morphogenesis control. This Parvibaculum lavamentivorans (strain DS-1 / DSM 13023 / NCIMB 13966) protein is GTPase Obg.